The sequence spans 197 residues: Probable GTP-binding protein EngB (197 aa).

In terms of domain architecture, EngB-type G spans 22–197 (TGVEVAFAGR…FKEKLDTWYQ (176 aa)). GTP is bound by residues 30 to 37 (GRSNAGKS), 57 to 61 (GRTQL), 75 to 78 (DLPG), 142 to 145 (TKAD), and 177 to 179 (FSS). 2 residues coordinate Mg(2+): serine 37 and threonine 59.

This sequence belongs to the TRAFAC class TrmE-Era-EngA-EngB-Septin-like GTPase superfamily. EngB GTPase family. Mg(2+) serves as cofactor.

In terms of biological role, necessary for normal cell division and for the maintenance of normal septation. In Francisella tularensis subsp. tularensis (strain FSC 198), this protein is Probable GTP-binding protein EngB.